Here is a 71-residue protein sequence, read N- to C-terminus: Sodium channel neurotoxin MeuNaTxalpha-12 (71 aa).

The signal sequence occupies residues 1 to 6; sequence MTGVES. The region spanning 8 to 70 is the LCN-type CS-alpha/beta domain; the sequence is RDAYIAQGNN…VPIRIQGKCQ (63 aa). Intrachain disulfides connect Cys-18–Cys-69, Cys-22–Cys-42, Cys-28–Cys-52, and Cys-32–Cys-54. Arg-71 is a propeptide (removed by a carboxypeptidase).

Belongs to the long (4 C-C) scorpion toxin superfamily. Sodium channel inhibitor family. Alpha subfamily. In terms of tissue distribution, expressed by the venom gland.

It is found in the secreted. Functionally, alpha toxins bind voltage-independently at site-3 of sodium channels (Nav) and inhibit the inactivation of the activated channels, thereby blocking neuronal transmission. In Mesobuthus eupeus (Lesser Asian scorpion), this protein is Sodium channel neurotoxin MeuNaTxalpha-12.